Consider the following 860-residue polypeptide: Protein argonaute-2 (860 aa).

Y2 bears the 3'-nitrotyrosine mark. A PAZ domain is found at 230 to 349; sequence PVIEFVCEVL…LPLEVCNIVA (120 aa). Residues 312-317 are interaction with guide RNA; that stretch reads YFKDRH. Phosphoserine is present on S388. The region spanning 518–819 is the Piwi domain; sequence LVVVILPGKT…VAFRARYHLV (302 aa). The segment at 525–567 is interaction with guide RNA; sequence GKTPVYAEVKRVGDTVLGMATQCVQMKNVQRTTPQTLSNLCLK. The segment at 588-591 is interaction with GW182 family members; it reads FQQP. D598 is a binding site for a divalent metal cation. An interaction with GW182 family members region spans residues 651 to 661; sequence LIQFYKSTRFK. D670 serves as a coordination point for a divalent metal cation. At P701 the chain carries 4-hydroxyproline. Interaction with guide RNA stretches follow at residues 710 to 711, 754 to 762, and 791 to 813; these read KR, HAGIQGTSR, and YVRC…VAFR. Residue H808 coordinates a divalent metal cation. Phosphoserine is present on residues S825, S829, S832, and S835.

The protein belongs to the argonaute family. Ago subfamily. As to quaternary structure, interacts with DICER1 through its Piwi domain and with TARBP2 during assembly of the RNA-induced silencing complex (RISC). Together, DICER1, AGO2 and TARBP2 constitute the trimeric RISC loading complex (RLC), or micro-RNA (miRNA) loading complex (miRLC). Within the RLC/miRLC, DICER1 and TARBP2 are required to process precursor miRNAs (pre-miRNAs) to mature miRNAs and then load them onto AGO2. AGO2 bound to the mature miRNA constitutes the minimal RISC and may subsequently dissociate from DICER1 and TARBP2. Note however that the term RISC has also been used to describe the trimeric RLC/miRLC. The formation of RISC complexes containing siRNAs rather than miRNAs appears to occur independently of DICER1. Interacts with AGO1. Also interacts with DDB1, DDX5, DDX6, DDX20, DHX30, DHX36, DDX47, DHX9, ELAVL, FXR1, GEMIN4, HNRNPF, IGF2BP1, ILF3, IMP8, MATR3, PABPC1, PRMT5, P4HA1, P4HB, RBM4, SART3, TNRC6A, TNRC6B, UPF1 and YBX1. Interacts with the P-body components DCP1A and XRN1. Associates with polysomes and messenger ribonucleoproteins (mNRPs). Interacts with RBM4; the interaction is modulated under stress-induced conditions, occurs under both cell proliferation and differentiation conditions and in an RNA- and phosphorylation-independent manner. Interacts with LIMD1, WTIP and AJUBA. Interacts with TRIM71. Interacts with APOBEC3G in an RNA-dependent manner. Interacts with APOBEC3A, APOBEC3C, APOBEC3F and APOBEC3H. Interacts with DICER1, TARBP2, EIF6, MOV10 and RPL7A (60S ribosome subunit); they form a large RNA-induced silencing complex (RISC). Interacts with FMR1. Interacts with ZFP36. Interacts with RC3H1; the interaction is RNA independent. Interacts with ARB2A. Found in a complex composed of AGO2, CHD7 and ARB2A. Interacts with SND1 and SYT11. Interacts with CLNK. Interacts with GARRE1. Interacts with GRB2; this interaction is important for the formation of a ternary complex containing GRB2, AGO2 and DICER1. It depends on Mg(2+) as a cofactor. Mn(2+) serves as cofactor. Hydroxylated. 4-hydroxylation appears to enhance protein stability but is not required for miRNA-binding or endonuclease activity. Post-translationally, ubiquitinated on surface-exposed lysines by a SCF-like E3 ubiquitin-protein ligase complex containing ZSWIM8 during target-directed microRNA degradation (TDMD), a process that mediates degradation of microRNAs (miRNAs). Ubiquitination by the SCF-like E3 ubiquitin-protein ligase complex containing ZSWIM8 leads to its subsequent degradation, thereby exposing miRNAs for degradation. ZSWIM8 recognizes and binds AGO2 when it is engaged with a TDMD target. In terms of processing, phosphorylation at Ser-388 by AKT3; leads to up-regulate translational repression of microRNA target and down-regulate endonucleolytic cleavage. A phosphorylation cycle of C-terminal serine cluster (Ser-825-Ser-835) regulates the release of target mRNAs. Target-binding leads to phosphorylation of these residues by CSNK1A1, which reduces the affinity of AGO2 for mRNA and enables target release. The ANKRD52-PPP6C phosphatase complex dephosphorylates the residues, which primes AGO2 for binding a new target. As to expression, ubiquitous expression in 9.5 day embryos with highest levels in forebrain, heart, limb buds, and branchial arches.

The protein resides in the cytoplasm. Its subcellular location is the P-body. It localises to the nucleus. The enzyme catalyses Endonucleolytic cleavage to 5'-phosphomonoester.. Functionally, required for RNA-mediated gene silencing (RNAi) by the RNA-induced silencing complex (RISC). The 'minimal RISC' appears to include AGO2 bound to a short guide RNA such as a microRNA (miRNA) or short interfering RNA (siRNA). These guide RNAs direct RISC to complementary mRNAs that are targets for RISC-mediated gene silencing. The precise mechanism of gene silencing depends on the degree of complementarity between the miRNA or siRNA and its target. Binding of RISC to a perfectly complementary mRNA generally results in silencing due to endonucleolytic cleavage of the mRNA specifically by AGO2. Binding of RISC to a partially complementary mRNA results in silencing through inhibition of translation, and this is independent of endonuclease activity. May inhibit translation initiation by binding to the 7-methylguanosine cap, thereby preventing the recruitment of the translation initiation factor eIF4-E. May also inhibit translation initiation via interaction with EIF6, which itself binds to the 60S ribosomal subunit and prevents its association with the 40S ribosomal subunit. The inhibition of translational initiation leads to the accumulation of the affected mRNA in cytoplasmic processing bodies (P-bodies), where mRNA degradation may subsequently occur. In some cases RISC-mediated translational repression is also observed for miRNAs that perfectly match the 3' untranslated region (3'-UTR). Can also up-regulate the translation of specific mRNAs under certain growth conditions. Binds to the AU element of the 3'-UTR of the TNF (TNF-alpha) mRNA and up-regulates translation under conditions of serum starvation. Also required for transcriptional gene silencing (TGS), in which short RNAs known as antigene RNAs or agRNAs direct the transcriptional repression of complementary promoter regions. Regulates lymphoid and erythroid development and function, and this is independent of endonuclease activity. The protein is Protein argonaute-2 (Ago2) of Mus musculus (Mouse).